The primary structure comprises 416 residues: D-amino acid dehydrogenase (416 aa).

3 to 17 (ITILGSGVIGVTTAY) contacts FAD.

The protein belongs to the DadA oxidoreductase family. Requires FAD as cofactor.

The catalysed reaction is a D-alpha-amino acid + A + H2O = a 2-oxocarboxylate + AH2 + NH4(+). It participates in amino-acid degradation; D-alanine degradation; NH(3) and pyruvate from D-alanine: step 1/1. Oxidative deamination of D-amino acids. The polypeptide is D-amino acid dehydrogenase (Brucella abortus (strain S19)).